The following is a 68-amino-acid chain: Conotoxin Cal14.13c (68 aa).

Positions 1–20 (MKLCVVXVLLMLAMPFNGGE) are cleaved as a signal peptide. Positions 21-68 (ASRFFNQHARSQRSGMKTRGIWCDPPCPEGETCRGGECSDEFNGDLGG) are excised as a propeptide. Position 66 is a leucine amide (leucine 66).

In terms of processing, contains 2 disulfide bonds. In terms of tissue distribution, expressed by the venom duct.

It is found in the secreted. Probable neurotoxin with unknown target. Possibly targets ion channels. The chain is Conotoxin Cal14.13c from Californiconus californicus (California cone).